The sequence spans 218 residues: Large ribosomal subunit protein bL25 (218 aa).

A disordered region spans residues 185–218 (ARAAEEEAPAAEETTAEPELVRERREPRAEEEEE). Acidic residues predominate over residues 190–200 (EEAPAAEETTA). Residues 203 to 212 (ELVRERREPR) are compositionally biased toward basic and acidic residues.

Belongs to the bacterial ribosomal protein bL25 family. CTC subfamily. As to quaternary structure, part of the 50S ribosomal subunit; part of the 5S rRNA/L5/L18/L25 subcomplex. Contacts the 5S rRNA. Binds to the 5S rRNA independently of L5 and L18.

This is one of the proteins that binds to the 5S RNA in the ribosome where it forms part of the central protuberance. The protein is Large ribosomal subunit protein bL25 of Roseiflexus castenholzii (strain DSM 13941 / HLO8).